A 158-amino-acid polypeptide reads, in one-letter code: 3-dehydroquinate dehydratase (158 aa).

Tyr-22 (proton acceptor) is an active-site residue. Substrate contacts are provided by Asn-74, His-80, and Asp-87. Catalysis depends on His-100, which acts as the Proton donor. Residues 101–102 (IS) and Arg-111 contribute to the substrate site.

It belongs to the type-II 3-dehydroquinase family. In terms of assembly, homododecamer.

The enzyme catalyses 3-dehydroquinate = 3-dehydroshikimate + H2O. It functions in the pathway metabolic intermediate biosynthesis; chorismate biosynthesis; chorismate from D-erythrose 4-phosphate and phosphoenolpyruvate: step 3/7. Functionally, catalyzes a trans-dehydration via an enolate intermediate. The polypeptide is 3-dehydroquinate dehydratase (Helicobacter hepaticus (strain ATCC 51449 / 3B1)).